The chain runs to 211 residues: Large ribosomal subunit protein uL4 (211 aa).

A disordered region spans residues 44 to 90 (ERQGTHSTLTKGEVRGGGKKPWRQKHTGKARTGSTRNPHWTGGGVVF). Basic residues predominate over residues 60–72 (GGKKPWRQKHTGK).

It belongs to the universal ribosomal protein uL4 family. As to quaternary structure, part of the 50S ribosomal subunit.

Its function is as follows. One of the primary rRNA binding proteins, this protein initially binds near the 5'-end of the 23S rRNA. It is important during the early stages of 50S assembly. It makes multiple contacts with different domains of the 23S rRNA in the assembled 50S subunit and ribosome. In terms of biological role, forms part of the polypeptide exit tunnel. The chain is Large ribosomal subunit protein uL4 from Ureaplasma parvum serovar 3 (strain ATCC 27815 / 27 / NCTC 11736).